A 294-amino-acid polypeptide reads, in one-letter code: Nucleophosmin (294 aa).

The span at 121 to 133 (LEEEPESEDEEED) shows a compositional bias: acidic residues. The interval 121–244 (LEEEPESEDE…PKTPKVPLSL (124 aa)) is disordered. Residues 153–158 (PQKKPK) carry the Nuclear localization signal motif. The segment covering 161–186 (EDDEDDDEDEDDDEDDEDDLDDDEEE) has biased composition (acidic residues). Residues 190–196 (PMKKPAR) carry the Nuclear localization signal motif. Residues 223–233 (KTPDSKKDKSL) show a composition bias toward basic and acidic residues.

Belongs to the nucleoplasmin family. Decamer formed by two pentameric rings associated in a head-to-head fashion. Post-translationally, phosphorylated.

The protein localises to the cytoplasm. It is found in the nucleus. The protein resides in the nucleoplasm. It localises to the nucleolus. In terms of biological role, acts as a chaperonin for the core histones H3, H2B and H4. Associated with nucleolar ribonucleoprotein structures and bind single-stranded nucleic acids. It may function in the assembly and/or transport of ribosome. May stimulate endonuclease activity on apurinic/apyrimidinic (AP) double-stranded DNA. May inhibit endonuclease activity on AP single-stranded RNA. The sequence is that of Nucleophosmin (NPM1) from Gallus gallus (Chicken).